The following is a 517-amino-acid chain: Pseudaminic acid cytidylyltransferase and UDP-2,4-diacetamido-2,4,6-trideoxy-beta-L-altropyranose hydrolase (517 aa).

A pseudaminic acid cytidylyltransferase region spans residues M1–I208. The interval A209–I517 is UDP-2,4-diacetamido-2,4,6-trideoxy-beta-L-altropyranose hydrolase. Residue H244 is the Proton acceptor; for UDP-2,4-diacetamido-2,4,6-trideoxy-beta-L-altropyranose hydrolase activity of the active site.

It in the N-terminal section; belongs to the CMP-NeuNAc synthase family. The protein in the C-terminal section; belongs to the PseG family. Monomer. It depends on Mg(2+) as a cofactor.

The catalysed reaction is UDP-2,4-diacetamido-2,4,6-trideoxy-beta-L-altrose + H2O = 2,4-diacetamido-2,4,6-trideoxy-beta-L-altrose + UDP + H(+). It catalyses the reaction pseudaminate + CTP = CMP-pseudaminate + diphosphate. Catalyzes the fourth and sixth steps in the biosynthesis of pseudaminic acid, a sialic-acid-like sugar that is used to modify flagellin. The C-terminus mediates the fourth step of the pathway and catalyzes the removal of UDP from C-1 of UDP-2,4-diacetamido-2,4,6-trideoxy-beta-L-altropyranose forming 2,4-diacetamido-2,4,6-trideoxy-beta-L-altropyranose. The N-terminal part mediates the last step of the pathway by mediating activation of pseudaminic acid with CMP by forming CMP-pseudaminic acid. The chain is Pseudaminic acid cytidylyltransferase and UDP-2,4-diacetamido-2,4,6-trideoxy-beta-L-altropyranose hydrolase from Helicobacter pylori (strain ATCC 700392 / 26695) (Campylobacter pylori).